A 396-amino-acid chain; its full sequence is Beta-1,3-N-acetylglucosaminyltransferase radical fringe (396 aa).

Topologically, residues 1–6 (MNFSCL) are cytoplasmic. A helical; Signal-anchor for type II membrane protein membrane pass occupies residues 7–27 (GLSKICFLVSVIFCTFLLLFI). At 28–396 (PKTKTPWRPR…THWCPPRKTR (369 aa)) the chain is on the lumenal side. N-linked (GlcNAc...) asparagine glycosylation is found at Asn-49 and Asn-120. Arg-145 serves as a coordination point for substrate. Asn-184 carries an N-linked (GlcNAc...) asparagine glycan. Disulfide bonds link Cys-185–Cys-196 and Cys-214–Cys-277. Substrate is bound at residue Asp-218. A Mn(2+)-binding site is contributed by Asp-219. The active site involves Asp-307. His-331 is a binding site for Mn(2+). Residues Cys-381 and Cys-390 are joined by a disulfide bond.

It belongs to the glycosyltransferase 31 family. Mn(2+) is required as a cofactor. Detected in the mesanchymal region of the developing limb. Expressed in mesoderm but not in ectoderm with no evident boundary of expression.

It is found in the golgi apparatus membrane. It carries out the reaction 3-O-(alpha-L-fucosyl)-L-threonyl-[EGF-like domain protein] + UDP-N-acetyl-alpha-D-glucosamine = 3-O-(N-acetyl-beta-D-glucosaminyl-(1-&gt;3)-alpha-L-fucosyl)-L-threonyl-[EGF-like domain protein] + UDP + H(+). It catalyses the reaction 3-O-(alpha-L-fucosyl)-L-seryl-[EGF-like domain protein] + UDP-N-acetyl-alpha-D-glucosamine = 3-O-(N-acetyl-beta-D-glucosaminyl-(1-&gt;3)-alpha-L-fucosyl)-L-seryl-[EGF-like domain protein] + UDP + H(+). Glycosyltransferase that initiates the elongation of O-linked fucose residues attached to EGF-like repeats in the extracellular domain of Notch molecules. Involved in forelimb development and in adult forelimb regeneration. The polypeptide is Beta-1,3-N-acetylglucosaminyltransferase radical fringe (RFNG) (Notophthalmus viridescens (Eastern newt)).